Reading from the N-terminus, the 223-residue chain is Ribosomal RNA small subunit methyltransferase Nep1 (223 aa).

S-adenosyl-L-methionine is bound by residues Gly181, Gly186, and 199-204 (LYREPL).

It belongs to the class IV-like SAM-binding methyltransferase superfamily. RNA methyltransferase NEP1 family. As to quaternary structure, homodimer.

The enzyme catalyses a pseudouridine in rRNA + S-adenosyl-L-methionine = an N(1)-methylpseudouridine in rRNA + S-adenosyl-L-homocysteine + H(+). Functionally, methyltransferase involved in ribosomal biogenesis. Specifically catalyzes the N1-methylation of the pseudouridine corresponding to position 914 in M.jannaschii 16S rRNA. The protein is Ribosomal RNA small subunit methyltransferase Nep1 of Pyrococcus furiosus (strain ATCC 43587 / DSM 3638 / JCM 8422 / Vc1).